Here is a 429-residue protein sequence, read N- to C-terminus: 3-phosphoshikimate 1-carboxyvinyltransferase (429 aa).

Positions 11, 12, and 16 each coordinate 3-phosphoshikimate. Lys-11 lines the phosphoenolpyruvate pocket. Phosphoenolpyruvate-binding residues include Gly-82 and Arg-110. The 3-phosphoshikimate site is built by Ser-155, Gln-157, Asp-302, and Lys-329. Residue Gln-157 coordinates phosphoenolpyruvate. The active-site Proton acceptor is Asp-302. Residues Arg-333 and Arg-385 each contribute to the phosphoenolpyruvate site.

The protein belongs to the EPSP synthase family. As to quaternary structure, monomer.

It localises to the cytoplasm. It catalyses the reaction 3-phosphoshikimate + phosphoenolpyruvate = 5-O-(1-carboxyvinyl)-3-phosphoshikimate + phosphate. It participates in metabolic intermediate biosynthesis; chorismate biosynthesis; chorismate from D-erythrose 4-phosphate and phosphoenolpyruvate: step 6/7. Its function is as follows. Catalyzes the transfer of the enolpyruvyl moiety of phosphoenolpyruvate (PEP) to the 5-hydroxyl of shikimate-3-phosphate (S3P) to produce enolpyruvyl shikimate-3-phosphate and inorganic phosphate. The sequence is that of 3-phosphoshikimate 1-carboxyvinyltransferase from Helicobacter pylori (strain J99 / ATCC 700824) (Campylobacter pylori J99).